Consider the following 644-residue polypeptide: Macrolide export ATP-binding/permease protein MacB (644 aa).

Residues 4-242 form the ABC transporter domain; it reads IECKNINRYF…SNVGRIQEKA (239 aa). An ATP-binding site is contributed by 40 to 47; it reads GQSGSGKS. A run of 4 helical transmembrane segments spans residues 270–290, 524–544, 574–594, and 607–627; these read LLTMLGIIIGIASVVSVVALG, IALISLVVGGIGVMNIMLVSV, LICIIGGLVGVGLSAAVSLVF, and AASVIGAVACSTGIGIAFGFM.

This sequence belongs to the ABC transporter superfamily. Macrolide exporter (TC 3.A.1.122) family. In terms of assembly, homodimer.

It localises to the cell inner membrane. Its function is as follows. Non-canonical ABC transporter that contains transmembrane domains (TMD), which form a pore in the inner membrane, and an ATP-binding domain (NBD), which is responsible for energy generation. Overexpression confers resistance against macrolides. The chain is Macrolide export ATP-binding/permease protein MacB from Neisseria gonorrhoeae.